A 159-amino-acid polypeptide reads, in one-letter code: 3-dehydroquinate dehydratase (159 aa).

Catalysis depends on Tyr31, which acts as the Proton acceptor. Residues Asn82, His88, and Asp95 each coordinate substrate. His109 (proton donor) is an active-site residue. Substrate contacts are provided by residues 110 to 111 (IS) and Arg120.

It belongs to the type-II 3-dehydroquinase family. Homododecamer.

It carries out the reaction 3-dehydroquinate = 3-dehydroshikimate + H2O. The protein operates within metabolic intermediate biosynthesis; chorismate biosynthesis; chorismate from D-erythrose 4-phosphate and phosphoenolpyruvate: step 3/7. Its function is as follows. Catalyzes a trans-dehydration via an enolate intermediate. This Streptomyces avermitilis (strain ATCC 31267 / DSM 46492 / JCM 5070 / NBRC 14893 / NCIMB 12804 / NRRL 8165 / MA-4680) protein is 3-dehydroquinate dehydratase.